The sequence spans 172 residues: Small ribosomal subunit protein uS5 (172 aa).

Positions 13–76 constitute an S5 DRBM domain; that stretch reads LIEKMVAVNR…DQARRSMIKV (64 aa).

This sequence belongs to the universal ribosomal protein uS5 family. As to quaternary structure, part of the 30S ribosomal subunit. Contacts proteins S4 and S8.

Functionally, with S4 and S12 plays an important role in translational accuracy. Its function is as follows. Located at the back of the 30S subunit body where it stabilizes the conformation of the head with respect to the body. In Neisseria gonorrhoeae (strain ATCC 700825 / FA 1090), this protein is Small ribosomal subunit protein uS5.